The sequence spans 862 residues: Axin-1 (862 aa).

The tract at residues 1–78 is disordered; it reads MNIQEQGFPL…GYEPEGSASP (78 aa). The Tankyrase-binding motif motif lies at 20–29; it reads APRPPVPGEE. Serine 75 and serine 77 each carry phosphoserine; by CK1. Positions 88–211 constitute an RGS domain; sequence SLHSLLDDQD…LKSDIYLEYT (124 aa). Residues 209 to 338 form an interaction with TP53 region; that stretch reads EYTRTGSESP…DADTLSLTDS (130 aa). Disordered regions lie at residues 215–289 and 316–344; these read SESP…YSEG and TSANDSEQQSLSSDADTLSLTDSSVDGIP. Serine 217 bears the Phosphoserine; by CK1 mark. Acidic residues predominate over residues 242-258; it reads NEDEEWKCDQDMDEDDG. The segment covering 325 to 339 has biased composition (low complexity); it reads SLSSDADTLSLTDSS. The tract at residues 348-433 is interaction with GSK3B; sequence IRKQHRREMQ…DGDPSSGPPG (86 aa). The interaction with SIAH1 and SIAH2 stretch occupies residues 353–411; the sequence is RREMQESVQVNGRVPLPHIPRTYRVPKEVRVEPQKFAEELIHRLEAVQRTREAEEKLEE. The segment at 413 to 441 is disordered; that stretch reads LKRVRMEEEGEDGDPSSGPPGPCHKLPPA. Residues 429 to 441 show a composition bias toward pro residues; it reads SGPPGPCHKLPPA. The tract at residues 434-502 is interaction with CTNNB1; the sequence is PCHKLPPAPA…SPDSGHVAKM (69 aa). Serine 469 bears the Phosphoserine; by CK1 mark. The segment at 480 to 500 is disordered; that stretch reads RTPGRQSPGPGHRSPDSGHVA. Threonine 481 is modified (phosphothreonine; by GSK3-beta). A phosphoserine mark is found at serine 486, serine 493, and serine 511. The interval 507-757 is interaction with RNF111; sequence GGAASGHGKH…PVLHVVPAVS (251 aa). Over residues 531 to 544 the composition is skewed to basic residues; sequence HHRHVHHHVHHSTA. Disordered stretches follow at residues 531–629 and 641–679; these read HHRH…AEKN and KEISRHRRTGHGSSGTRKPQPHENSRPLSLEHPWAGPQL. The segment covering 545-556 has biased composition (basic and acidic residues); the sequence is RPKEQVEAEATR. Residues 575 to 789 are interaction with PPP2CA; the sequence is SRGYSESVGA…CDSIVVAYYF (215 aa). Phosphoserine is present on serine 581. The tract at residues 677 to 752 is interaction with HIPK2; the sequence is PQLRTSVQPS…RPACAPVLHV (76 aa). Residues 780-862 enclose the DIX domain; that stretch reads CDSIVVAYYF…KIIGKVEKVD (83 aa). Residues lysine 857 and lysine 860 each participate in a glycyl lysine isopeptide (Lys-Gly) (interchain with G-Cter in SUMO) cross-link.

In terms of assembly, homodimer. Interacts with ZBED3; the interaction is direct, enhanced by protein kinase GSK3B and casein kinase CSNK1E activities and decreases GSK3B-induced beta-catenin serine and threonine phosphorylations. Component of the beta-catenin destruction complex, containing at least, CTNNB1, an axin and GSK3B, that regulates CTNNB1 protein levels through phosphorylation and ubiquitination. Interacts with CTNNB1 (via the armadillo repeats 2-7). Interacts with GSK3B; the interaction hyperphosphorylates CTNNB1 leading to its ubiquitination and destruction. Component of the AXIN1-HIPK2-TP53 complex. Interacts directly in the complex with TP53 and HIPK2. Interacts with DAXX; the interaction stimulates the interaction of DAXX with TP53, stimulates 'Ser-46' phosphorylation of TP53 and induces cell death on UV irradiation. Also binds APC, SMAD6, SMAD7 and RNF111. Interacts with DIXDC1; prevents interaction with MAP3K1. Interacts with MAP3K4. Interacts with ANKRD6 and AIDA. Interacts with MDFI; the interaction decreases AXIN1-mediated JUN N-terminal kinase (JNK) activation. Interacts with MDFIC; the interaction inhibits beta-cateninin-mediated signaling and AXIN1-mediated JUN N-terminal kinase (JNK) activation. Interacts with LRP5 (via its phosphorylated PPPSP motifs); the interaction is stimulated by WNT1 and GSK3B and activates beta-catenin signaling. Interacts (via the C-terminal) with PPP1CA; the interaction dephosphorylates AXIN1 and regulates interaction with GSK3B. Interacts with PPP2CA; the interaction dephosphorylates AXIN1. Interacts with MACF1. Found in a complex composed of MACF1, APC, AXIN1, CTNNB1 and GSK3B. Interacts with TNKS. Interacts with DAB2; the interaction is mutually exclusive with the AXIN1:PPP1CA interaction. Interacts with WDR26. Interacts with GID8. Interacts with SIAH1 and SIAH2; both probably catalyze AXIN1 ubiquitination and subsequent proteasome-mediated ubiquitin-dependent degradation. Interaction with GSK3B and AXIN1 is competitive. Post-translationally, phosphorylation and dephosphorylation of AXIN1 regulates assembly and function of the beta-catenin complex. Phosphorylated by CK1 and GSK3B. Dephosphorylated by PPP1CA and PPP2CA. Phosphorylation by CK1 enhances binding of GSK3B to AXIN1. ADP-ribosylated by tankyrase TNKS and TNKS2. Poly-ADP-ribosylated protein is recognized by RNF146, followed by ubiquitination at 'Lys-48' and subsequent activation of the Wnt signaling pathway. In terms of processing, ubiquitinated by RNF146 when poly-ADP-ribosylated, leading to its degradation and subsequent activation of the Wnt signaling pathway. Sumoylation at Lys-857 and Lys-860 prevents ubiquitination and degradation. Sumoylation is required for AXIN1-mediated JNK activation. Deubiquitinated by USP34, deubiquitinated downstream of beta-catenin stabilization step: deubiquitination is important for nuclear accumulation during Wnt signaling to positively regulate beta-catenin (CTNBB1)-mediated transcription. Ubiquitination by SIAH1 and SIAH2 induces its proteasomal degradation as part of the activation of the Wnt signaling pathway. In terms of tissue distribution, ubiquitously expressed.

The protein localises to the cytoplasm. It is found in the nucleus. The protein resides in the membrane. Its subcellular location is the cell membrane. Its function is as follows. Component of the beta-catenin destruction complex required for regulating CTNNB1 levels through phosphorylation and ubiquitination, and modulating Wnt-signaling. Controls dorsoventral patterning via two opposing effects; down-regulates CTNNB1 to inhibit the Wnt signaling pathway and ventralize embryos, but also dorsalizes embryos by activating a Wnt-independent JNK signaling pathway. In Wnt signaling, probably facilitates the phosphorylation of CTNNB1 and APC by GSK3B. Likely to function as a tumor suppressor. Enhances TGF-beta signaling by recruiting the RNF111 E3 ubiquitin ligase and promoting the degradation of inhibitory SMAD7. Also a component of the AXIN1-HIPK2-TP53 complex which controls cell growth, apoptosis and development. Facilitates the phosphorylation of TP53 by HIPK2 upon ultraviolet irradiation. The sequence is that of Axin-1 (AXIN1) from Homo sapiens (Human).